The following is a 540-amino-acid chain: DNA topoisomerase 1 (540 aa).

A Toprim domain is found at 1–110 (MELFIVESPT…NIKRAVFYEI (110 aa)). Mg(2+) is bound by residues Glu7 and Asp79. One can recognise a Topo IA-type catalytic domain in the interval 126–536 (NMNLVYAQFA…FMEKIFGKEL (411 aa)). The interval 161–166 (SAGRVQ) is interaction with DNA. The O-(5'-phospho-DNA)-tyrosine intermediate role is filled by Tyr281.

Belongs to the type IA topoisomerase family. Monomer. Mg(2+) serves as cofactor.

It carries out the reaction ATP-independent breakage of single-stranded DNA, followed by passage and rejoining.. Functionally, releases the supercoiling and torsional tension of DNA, which is introduced during the DNA replication and transcription, by transiently cleaving and rejoining one strand of the DNA duplex. Introduces a single-strand break via transesterification at a target site in duplex DNA. The scissile phosphodiester is attacked by the catalytic tyrosine of the enzyme, resulting in the formation of a DNA-(5'-phosphotyrosyl)-enzyme intermediate and the expulsion of a 3'-OH DNA strand. The free DNA strand then undergoes passage around the unbroken strand, thus removing DNA supercoils. Finally, in the religation step, the DNA 3'-OH attacks the covalent intermediate to expel the active-site tyrosine and restore the DNA phosphodiester backbone. The protein is DNA topoisomerase 1 of Aquifex aeolicus (strain VF5).